Consider the following 447-residue polypeptide: Cysteine--tRNA ligase (447 aa).

Cysteine 28 lines the Zn(2+) pocket. The 'HIGH' region signature appears at 30–40 (PTVYNYIHIGN). Zn(2+)-binding residues include cysteine 211, histidine 236, and glutamate 240. The 'KMSKS' region signature appears at 268–272 (KMSKS). Lysine 271 lines the ATP pocket.

The protein belongs to the class-I aminoacyl-tRNA synthetase family. Monomer. Zn(2+) is required as a cofactor.

The protein resides in the cytoplasm. The catalysed reaction is tRNA(Cys) + L-cysteine + ATP = L-cysteinyl-tRNA(Cys) + AMP + diphosphate. The sequence is that of Cysteine--tRNA ligase from Streptococcus thermophilus (strain CNRZ 1066).